A 32-amino-acid polypeptide reads, in one-letter code: HEERVCPRILMKCKKDSDCLAECVCLEHGYCG.

Cystine bridges form between C6-C23, C13-C25, and C19-C31.

The protein belongs to the protease inhibitor I7 (squash-type serine protease inhibitor) family.

It is found in the secreted. In terms of biological role, inhibits trypsin. The chain is Trypsin inhibitor 4 from Cucurbita maxima (Pumpkin).